A 303-amino-acid polypeptide reads, in one-letter code: Ribosomal RNA small subunit methyltransferase H (303 aa).

Residues 36–38 (CGH), Asp55, Phe81, Asp101, and Gln108 each bind S-adenosyl-L-methionine.

The protein belongs to the methyltransferase superfamily. RsmH family.

It is found in the cytoplasm. It carries out the reaction cytidine(1402) in 16S rRNA + S-adenosyl-L-methionine = N(4)-methylcytidine(1402) in 16S rRNA + S-adenosyl-L-homocysteine + H(+). Functionally, specifically methylates the N4 position of cytidine in position 1402 (C1402) of 16S rRNA. This is Ribosomal RNA small subunit methyltransferase H from Aster yellows witches'-broom phytoplasma (strain AYWB).